The sequence spans 180 residues: ATP-dependent protease subunit HslV (180 aa).

Thr-6 is an active-site residue. Na(+) contacts are provided by Ala-164, Cys-167, and Thr-170.

The protein belongs to the peptidase T1B family. HslV subfamily. As to quaternary structure, a double ring-shaped homohexamer of HslV is capped on each side by a ring-shaped HslU homohexamer. The assembly of the HslU/HslV complex is dependent on binding of ATP.

The protein localises to the cytoplasm. It carries out the reaction ATP-dependent cleavage of peptide bonds with broad specificity.. Its activity is regulated as follows. Allosterically activated by HslU binding. Protease subunit of a proteasome-like degradation complex believed to be a general protein degrading machinery. This is ATP-dependent protease subunit HslV from Borrelia recurrentis (strain A1).